The sequence spans 389 residues: Chaperone protein DnaJ (389 aa).

The J domain maps to 6 to 70 (DYYEILGLSK…EKRAQYDRFG (65 aa)). A CR-type zinc finger spans residues 131–213 (GVRKDIDIPR…CSGAGRVRSR (83 aa)). Zn(2+) contacts are provided by Cys144, Cys147, Cys161, Cys164, Cys187, Cys190, Cys201, and Cys204. 4 CXXCXGXG motif repeats span residues 144–151 (CSTCSGTG), 161–168 (CPNCGGTG), 187–194 (CSACHGRG), and 201–208 (CPTCSGAG). Residues 145-167 (STCSGTGAKPGTSPKRCPNCGGT) are disordered. The tract at residues 351–389 (LSNGKKPEAEERSRSDKQKSEKPRKSKGLFEKVKDAFES) is disordered. The segment covering 355–389 (KKPEAEERSRSDKQKSEKPRKSKGLFEKVKDAFES) has biased composition (basic and acidic residues).

This sequence belongs to the DnaJ family. In terms of assembly, homodimer. It depends on Zn(2+) as a cofactor.

The protein resides in the cytoplasm. Participates actively in the response to hyperosmotic and heat shock by preventing the aggregation of stress-denatured proteins and by disaggregating proteins, also in an autonomous, DnaK-independent fashion. Unfolded proteins bind initially to DnaJ; upon interaction with the DnaJ-bound protein, DnaK hydrolyzes its bound ATP, resulting in the formation of a stable complex. GrpE releases ADP from DnaK; ATP binding to DnaK triggers the release of the substrate protein, thus completing the reaction cycle. Several rounds of ATP-dependent interactions between DnaJ, DnaK and GrpE are required for fully efficient folding. Also involved, together with DnaK and GrpE, in the DNA replication of plasmids through activation of initiation proteins. The polypeptide is Chaperone protein DnaJ (Methanosarcina mazei (strain ATCC BAA-159 / DSM 3647 / Goe1 / Go1 / JCM 11833 / OCM 88) (Methanosarcina frisia)).